Reading from the N-terminus, the 230-residue chain is LexA repressor (230 aa).

The segment at 1–21 (MSDDSSETRTGGRRGADAGLT) is disordered. The H-T-H motif DNA-binding region spans 44–64 (IREIGDAVGLTSTSSVAHQLR). Catalysis depends on for autocatalytic cleavage activity residues serine 154 and lysine 191.

Belongs to the peptidase S24 family. As to quaternary structure, homodimer.

It carries out the reaction Hydrolysis of Ala-|-Gly bond in repressor LexA.. Represses a number of genes involved in the response to DNA damage (SOS response), including recA and lexA. In the presence of single-stranded DNA, RecA interacts with LexA causing an autocatalytic cleavage which disrupts the DNA-binding part of LexA, leading to derepression of the SOS regulon and eventually DNA repair. The protein is LexA repressor of Mycobacterium sp. (strain JLS).